Here is a 229-residue protein sequence, read N- to C-terminus: UPF0758 protein Fjoh_0413 (229 aa).

The MPN domain occupies 107–229; that stretch reads KITSSKDAFT…YYSFVDEGIF (123 aa). Residues His-178, His-180, and Asp-191 each coordinate Zn(2+). Residues 178-191 carry the JAMM motif motif; the sequence is HNHPSGELNPSQAD.

The protein belongs to the UPF0758 family.

This Flavobacterium johnsoniae (strain ATCC 17061 / DSM 2064 / JCM 8514 / BCRC 14874 / CCUG 350202 / NBRC 14942 / NCIMB 11054 / UW101) (Cytophaga johnsonae) protein is UPF0758 protein Fjoh_0413.